The sequence spans 557 residues: Aerobic glycerol-3-phosphate dehydrogenase (557 aa).

21-49 (DLVIIGGGITGAGIALDASERGMKVALVE) is a binding site for FAD.

Belongs to the FAD-dependent glycerol-3-phosphate dehydrogenase family. Requires FAD as cofactor.

The protein localises to the cytoplasm. It carries out the reaction a quinone + sn-glycerol 3-phosphate = dihydroxyacetone phosphate + a quinol. Its pathway is polyol metabolism; glycerol degradation via glycerol kinase pathway; glycerone phosphate from sn-glycerol 3-phosphate (aerobic route): step 1/1. The sequence is that of Aerobic glycerol-3-phosphate dehydrogenase (glpD) from Staphylococcus aureus (strain USA300).